A 245-amino-acid polypeptide reads, in one-letter code: UDP-2,3-diacylglucosamine hydrolase (245 aa).

Mn(2+) is bound by residues Asp8, His10, Asp41, Asn80, and His115. 80–81 (NR) provides a ligand contact to substrate. The substrate site is built by Asp123, Ser161, Lys165, Lys168, and His196. Mn(2+)-binding residues include His196 and His198.

It belongs to the LpxH family. Mn(2+) is required as a cofactor.

The protein localises to the cell inner membrane. The enzyme catalyses UDP-2-N,3-O-bis[(3R)-3-hydroxytetradecanoyl]-alpha-D-glucosamine + H2O = 2-N,3-O-bis[(3R)-3-hydroxytetradecanoyl]-alpha-D-glucosaminyl 1-phosphate + UMP + 2 H(+). It participates in glycolipid biosynthesis; lipid IV(A) biosynthesis; lipid IV(A) from (3R)-3-hydroxytetradecanoyl-[acyl-carrier-protein] and UDP-N-acetyl-alpha-D-glucosamine: step 4/6. In terms of biological role, hydrolyzes the pyrophosphate bond of UDP-2,3-diacylglucosamine to yield 2,3-diacylglucosamine 1-phosphate (lipid X) and UMP by catalyzing the attack of water at the alpha-P atom. Involved in the biosynthesis of lipid A, a phosphorylated glycolipid that anchors the lipopolysaccharide to the outer membrane of the cell. The sequence is that of UDP-2,3-diacylglucosamine hydrolase from Psychromonas ingrahamii (strain DSM 17664 / CCUG 51855 / 37).